The chain runs to 1511 residues: ATP-dependent permease PDR12 (1511 aa).

The span at 1–21 (MSSTDEHIEKDISSRSNHDDD) shows a compositional bias: basic and acidic residues. Positions 1–37 (MSSTDEHIEKDISSRSNHDDDYANSVQSYAASEGQVD) are disordered. Residue serine 2 is modified to N-acetylserine. Residues 2–508 (SSTDEHIEKD…RGFQRVKGDS (507 aa)) are Cytoplasmic-facing. Phosphoserine occurs at positions 32, 52, and 56. The ABC transporter 1 domain maps to 144–397 (IPAHLISKFT…FQRMGWVKPN (254 aa)). Lysine 426 is covalently cross-linked (Glycyl lysine isopeptide (Lys-Gly) (interchain with G-Cter in ubiquitin)). Residues 509 to 529 (TYTKVYLSSFLIKALIIGSMF) form a helical membrane-spanning segment. Over 530–548 (HKIDDKSQSTTAGAYSRGG) the chain is Extracellular. The helical transmembrane segment at 549–569 (MLFYVLLFASVTSLAEIGNSF) threads the bilayer. Residues 570–597 (SSRPVIVKHKSYSMYHLSAESLQEIITE) lie on the Cytoplasmic side of the membrane. The chain crosses the membrane as a helical span at residues 598–618 (FPTKFVAIVILCLITYWIPFM). Residues 619–622 (KYEA) are Extracellular-facing. Residues 623-643 (GAFFQYILYLLTVQQCTSFIF) traverse the membrane as a helical segment. Over 644–657 (KFVATMSKSGVDAH) the chain is Cytoplasmic. A helical membrane pass occupies residues 658-678 (AVGGLWVLMLCVYAGFVLPIG). Over 679 to 765 (EMHHWIRWLH…FAYKHAWRNW (87 aa)) the chain is Extracellular. Residues 766–786 (GVNIVWTFGYIVFNVILSEYL) traverse the membrane as a helical segment. At 787 to 1182 (KPVEGGGDLL…WRSPVYIRAK (396 aa)) the chain is on the cytoplasmic side. An ABC transporter 2 domain is found at 836–1084 (IAEKDVFTWN…TLLKYFERQS (249 aa)). Residues 878–885 (GESGAGKT) and 972–979 (AEALVGKT) contribute to the ATP site. Residues 1183 to 1203 (FFECVACALFVGLSYVGVNHS) form a helical membrane-spanning segment. Valine 1204 is a topological domain (extracellular). Residues 1205–1225 (GGAIEAFSSIFMLLLIALAMI) traverse the membrane as a helical segment. The Cytoplasmic segment spans residues 1226–1254 (NQLHVFAYDSRELYEVREAASNTFHWSVL). Residues 1255-1275 (LLCHAAVENFWSTLCQFMCFI) form a helical membrane-spanning segment. Over 1276–1291 (CYYWPAQFSGRASHAG) the chain is Extracellular. Residues 1292–1312 (FFFFFYVLIFPLYFVTYGLWI) form a helical membrane-spanning segment. The Cytoplasmic segment spans residues 1313-1318 (LYMSPD). The helical transmembrane segment at 1319–1339 (VPSASMINSNLFAAMLLFCGI) threads the bilayer. Topologically, residues 1340–1444 (LQPREKMPAF…NVKWDHRWRN (105 aa)) are extracellular. An N-linked (GlcNAc...) asparagine glycan is attached at asparagine 1405. A helical membrane pass occupies residues 1445–1465 (FGFMWAYICFNIAAMLICYYV). Residues 1466–1511 (VRVKVWSLKSVLNFKKWFNGPRKERHEKDTNIFQTVPGDENKITKK) are Cytoplasmic-facing.

It belongs to the ABC transporter superfamily. ABCG family. PDR (TC 3.A.1.205) subfamily.

The protein localises to the cell membrane. Plasma membrane transporter which mediates resistance to water-soluble, monocarboxylic acids with chain lengths of from C1 to C7 by active extrusion of the preservative anions from the cytosol. Also involved in the export of aromatic and branched-chain organic acids produced in amino acid catabolism. This Saccharomyces cerevisiae (strain ATCC 204508 / S288c) (Baker's yeast) protein is ATP-dependent permease PDR12 (PDR12).